Reading from the N-terminus, the 188-residue chain is MSIKSDKWIRRMAQEHGMIEPFVERQIRGEGDERVISYGVSSYGYDVRCADEFKVFTNINSAIVDPKNFDEKSFVDVKSDVCIIPPNSFALARTVEFFRIPRDVLTICLGKSTYARCGIIVNVTPLEPEWEGHVTLEFSNTTTLPAKIYANEGVAQMLFLQSDEACEVSYKDRAGKYQGQRGVTLPRA.

Residues 111-116 (KSTYAR), 135-137 (TLE), Gln-156, Tyr-170, and Gln-180 each bind dCTP. Residue Glu-137 is the Proton donor/acceptor of the active site.

This sequence belongs to the dCTP deaminase family. As to quaternary structure, homotrimer.

The enzyme catalyses dCTP + H2O + H(+) = dUTP + NH4(+). Its pathway is pyrimidine metabolism; dUMP biosynthesis; dUMP from dCTP (dUTP route): step 1/2. Its function is as follows. Catalyzes the deamination of dCTP to dUTP. In Pseudomonas fluorescens (strain SBW25), this protein is dCTP deaminase.